The chain runs to 572 residues: Proline--tRNA ligase (572 aa).

This sequence belongs to the class-II aminoacyl-tRNA synthetase family. ProS type 1 subfamily. Homodimer.

The protein localises to the cytoplasm. The enzyme catalyses tRNA(Pro) + L-proline + ATP = L-prolyl-tRNA(Pro) + AMP + diphosphate. In terms of biological role, catalyzes the attachment of proline to tRNA(Pro) in a two-step reaction: proline is first activated by ATP to form Pro-AMP and then transferred to the acceptor end of tRNA(Pro). As ProRS can inadvertently accommodate and process non-cognate amino acids such as alanine and cysteine, to avoid such errors it has two additional distinct editing activities against alanine. One activity is designated as 'pretransfer' editing and involves the tRNA(Pro)-independent hydrolysis of activated Ala-AMP. The other activity is designated 'posttransfer' editing and involves deacylation of mischarged Ala-tRNA(Pro). The misacylated Cys-tRNA(Pro) is not edited by ProRS. The sequence is that of Proline--tRNA ligase from Escherichia coli O17:K52:H18 (strain UMN026 / ExPEC).